We begin with the raw amino-acid sequence, 544 residues long: Methionine--tRNA ligase 2 (544 aa).

The 'HIGH' region motif lies at 10-20 (PYANGSLHLGH). Zn(2+) is bound by residues Cys141, Cys144, Cys153, and Cys156. Positions 329–333 (KLSTS) match the 'KMSKS' region motif. Thr332 contacts ATP.

It belongs to the class-I aminoacyl-tRNA synthetase family. MetG type 1 subfamily. Monomer. It depends on Zn(2+) as a cofactor.

The protein localises to the cytoplasm. It catalyses the reaction tRNA(Met) + L-methionine + ATP = L-methionyl-tRNA(Met) + AMP + diphosphate. Is required not only for elongation of protein synthesis but also for the initiation of all mRNA translation through initiator tRNA(fMet) aminoacylation. In Bacillus cereus (strain ATCC 14579 / DSM 31 / CCUG 7414 / JCM 2152 / NBRC 15305 / NCIMB 9373 / NCTC 2599 / NRRL B-3711), this protein is Methionine--tRNA ligase 2.